The primary structure comprises 385 residues: GTPase Obg (385 aa).

Positions M1 to L159 constitute an Obg domain. Positions A160–E333 constitute an OBG-type G domain. GTP-binding positions include G166–S173, F191–I195, D213–G216, N283–D286, and S314–I316. S173 and T193 together coordinate Mg(2+).

The protein belongs to the TRAFAC class OBG-HflX-like GTPase superfamily. OBG GTPase family. Monomer. The cofactor is Mg(2+).

The protein resides in the cytoplasm. In terms of biological role, an essential GTPase which binds GTP, GDP and possibly (p)ppGpp with moderate affinity, with high nucleotide exchange rates and a fairly low GTP hydrolysis rate. Plays a role in control of the cell cycle, stress response, ribosome biogenesis and in those bacteria that undergo differentiation, in morphogenesis control. The chain is GTPase Obg from Pseudoalteromonas translucida (strain TAC 125).